The sequence spans 900 residues: Nuclear factor NF-kappa-B p100 subunit (900 aa).

Residues Ser-23 and Ser-161 each carry the phosphoserine modification. An RHD domain is found at 38 to 343 (PYLVIVEQPK…EVQRKRRKAL (306 aa)). The Nuclear localization signal signature appears at 337–341 (RKRRK). Residues 346 to 377 (FSQPFGGGSHMGGGSGGAAGGYGGAGGGGSLG) form a GRR region. Residues 404–435 (GAQMAATVPSRDSGEEAAEPSAPSRTPQCEPQ) form a disordered region. Residue Thr-429 is modified to Phosphothreonine. ANK repeat units lie at residues 487 to 519 (NGDT…DLGV), 526 to 555 (LHQT…DPAL), 559 to 591 (HGDS…AVPQ), 599 to 628 (EGLY…EVEA), 633 to 663 (GGRT…NVNA), and 667 to 696 (AGNT…DIHA). Residues 698 to 734 (NEEPLCPLPSPPTSDSDSDSEGPEKDTRSSFRGHTPL) form a disordered region. Residues Ser-713, Ser-715, and Ser-717 each carry the phosphoserine modification. One copy of the ANK 7 repeat lies at 729–758 (RGHTPLDLTCSTKVKTLLLNAAQNTMEPPL). One can recognise a Death domain in the interval 764 to 851 (AGPGLSLGDT…EGVRLLRGPE (88 aa)). Ser-812 is modified (phosphoserine). The segment covering 849-866 (GPETRDKLPSTAEVKEDS) has biased composition (basic and acidic residues). Positions 849–900 (GPETRDKLPSTAEVKEDSAYGSQSVEQEAEKLGPPPEPPGGLCHGHPQPQVH) are disordered. A Glycyl lysine isopeptide (Lys-Gly) (interchain with G-Cter in ubiquitin) cross-link involves residue Lys-855. Residues Ser-866 and Ser-870 each carry the phosphoserine; by MAP3K14 modification. Over residues 888-900 (GGLCHGHPQPQVH) the composition is skewed to low complexity.

In terms of assembly, component of the NF-kappa-B RelB-p52 complex. Homodimer; component of the NF-kappa-B p52-p52 complex. Component of the NF-kappa-B p65-p52 complex. Component of the NF-kappa-B p52-c-Rel complex. NFKB2/p52 interacts with NFKBIE. Component of a complex consisting of the NF-kappa-B p50-p50 homodimer and BCL3. Directly interacts with MEN1. Post-translationally, while translation occurs, the particular unfolded structure after the GRR repeat promotes the generation of p52 making it an acceptable substrate for the proteasome. This process is known as cotranslational processing. The processed form is active and the unprocessed form acts as an inhibitor (I kappa B-like), being able to form cytosolic complexes with NF-kappa B, trapping it in the cytoplasm. Complete folding of the region downstream of the GRR repeat precludes processing. Subsequent to MAP3K14-dependent serine phosphorylation, p100 polyubiquitination occurs then triggering its proteasome-dependent processing. In terms of processing, constitutive processing is tightly suppressed by its C-terminal processing inhibitory domain, named PID, which contains the death domain. Post-translationally, ubiquitinated by TRIM55; leading to processing by VCP and subsequent ubiquitin-dependent protein degradation by the proteasome.

Its subcellular location is the nucleus. The protein resides in the cytoplasm. Functionally, NF-kappa-B is a pleiotropic transcription factor present in almost all cell types and is the endpoint of a series of signal transduction events that are initiated by a vast array of stimuli related to many biological processes such as inflammation, immunity, differentiation, cell growth, tumorigenesis and apoptosis. NF-kappa-B is a homo- or heterodimeric complex formed by the Rel-like domain-containing proteins RELA/p65, RELB, NFKB1/p105, NFKB1/p50, REL and NFKB2/p52. The dimers bind at kappa-B sites in the DNA of their target genes and the individual dimers have distinct preferences for different kappa-B sites that they can bind with distinguishable affinity and specificity. Different dimer combinations act as transcriptional activators or repressors, respectively. NF-kappa-B is controlled by various mechanisms of post-translational modification and subcellular compartmentalization as well as by interactions with other cofactors or corepressors. NF-kappa-B complexes are held in the cytoplasm in an inactive state complexed with members of the NF-kappa-B inhibitor (I-kappa-B) family. In a conventional activation pathway, I-kappa-B is phosphorylated by I-kappa-B kinases (IKKs) in response to different activators, subsequently degraded thus liberating the active NF-kappa-B complex which translocates to the nucleus. In a non-canonical activation pathway, the MAP3K14-activated CHUK/IKKA homodimer phosphorylates NFKB2/p100 associated with RelB, inducing its proteolytic processing to NFKB2/p52 and the formation of NF-kappa-B RelB-p52 complexes. The NF-kappa-B heterodimeric RelB-p52 complex is a transcriptional activator. The NF-kappa-B p52-p52 homodimer is a transcriptional repressor. NFKB2 appears to have dual functions such as cytoplasmic retention of attached NF-kappa-B proteins by p100 and generation of p52 by a cotranslational processing. The proteasome-mediated process ensures the production of both p52 and p100 and preserves their independent function. p52 binds to the kappa-B consensus sequence 5'-GGRNNYYCC-3', located in the enhancer region of genes involved in immune response and acute phase reactions. p52 and p100 are respectively the minor and major form; the processing of p100 being relatively poor. Isoform p49 is a subunit of the NF-kappa-B protein complex, which stimulates the HIV enhancer in synergy with p65. In concert with RELB, regulates the circadian clock by repressing the transcriptional activator activity of the CLOCK-BMAL1 heterodimer. The chain is Nuclear factor NF-kappa-B p100 subunit (NFKB2) from Homo sapiens (Human).